The following is a 316-amino-acid chain: tRNA pseudouridine synthase B (316 aa).

The active-site Nucleophile is Asp47.

This sequence belongs to the pseudouridine synthase TruB family. Type 1 subfamily.

It catalyses the reaction uridine(55) in tRNA = pseudouridine(55) in tRNA. Its function is as follows. Responsible for synthesis of pseudouridine from uracil-55 in the psi GC loop of transfer RNAs. This chain is tRNA pseudouridine synthase B, found in Aliivibrio fischeri (strain MJ11) (Vibrio fischeri).